Reading from the N-terminus, the 688-residue chain is Translation initiation factor IF-2 (688 aa).

2 stretches are compositionally biased toward basic and acidic residues: residues 53–62 (GKEKSEKTKE) and 86–95 (KRDDKNEKVN). The tract at residues 53-100 (GKEKSEKTKEEDDEIETTAKNPIKESMNNKKSNKRDDKNEKVNTENAE) is disordered. One can recognise a tr-type G domain in the interval 187 to 354 (KRSPIITVMG…MILLSSEILE (168 aa)). The segment at 196–203 (GHVDHGKT) is G1. Position 196-203 (196-203 (GHVDHGKT)) interacts with GTP. A G2 region spans residues 221 to 225 (GITQH). The interval 242 to 245 (DTPG) is G3. GTP contacts are provided by residues 242 to 246 (DTPGH) and 296 to 299 (NKID). The G4 stretch occupies residues 296-299 (NKID). Positions 332–334 (SAH) are G5.

The protein belongs to the TRAFAC class translation factor GTPase superfamily. Classic translation factor GTPase family. IF-2 subfamily.

The protein localises to the cytoplasm. One of the essential components for the initiation of protein synthesis. Protects formylmethionyl-tRNA from spontaneous hydrolysis and promotes its binding to the 30S ribosomal subunits. Also involved in the hydrolysis of GTP during the formation of the 70S ribosomal complex. This Clostridium botulinum (strain ATCC 19397 / Type A) protein is Translation initiation factor IF-2.